A 677-amino-acid polypeptide reads, in one-letter code: Transcription factor IIIB 90 kDa subunit (677 aa).

The TFIIB-type zinc finger occupies 2–33 (TGRVCRGCGGTDIELDAARGDAVCTACGSVLE). Residues Cys6, Cys9, Cys25, and Cys28 each coordinate Zn(2+). Repeat copies occupy residues 91-172 (RHIH…LLAR) and 185-269 (LYIP…EFED). Disordered stretches follow at residues 340–368 (KGGL…TEDE) and 385–413 (LLGG…SLLD). Position 365 is a phosphothreonine (Thr365). Phosphoserine is present on Ser450. Disordered stretches follow at residues 501–521 (YKEH…ASTA) and 544–653 (RGLS…EDGE). Ser553 is modified (phosphoserine). Residues 640–653 (EEADEEEPDEEDGE) show a composition bias toward acidic residues.

This sequence belongs to the TFIIB family. In terms of assembly, TFIIIB comprises at least the TATA-binding protein (TBP) and the B-related factor 1 (BRF1/TFIIIB90). Interacts with BDP1. Interacts with MAF1.

The protein resides in the nucleus. General activator of RNA polymerase which utilizes different TFIIIB complexes at structurally distinct promoters. The isoform 1 is involved in the transcription of tRNA, adenovirus VA1, 7SL and 5S RNA. Isoform 2 is required for transcription of the U6 promoter. The sequence is that of Transcription factor IIIB 90 kDa subunit (BRF1) from Homo sapiens (Human).